The sequence spans 276 residues: Putative ankyrin repeat protein R838 (276 aa).

ANK repeat units lie at residues 134 to 163, 164 to 193, 195 to 223, and 225 to 253; these read DGDN…DPRS, DYDY…DISS, NHWP…DVRA, and NYNP…EIGS. Positions 254 to 276 are disordered; the sequence is VSDDDTYDSDSSDYSEDDSESIN. Residues 255–276 are compositionally biased toward acidic residues; it reads SDDDTYDSDSSDYSEDDSESIN.

The polypeptide is Putative ankyrin repeat protein R838 (Acanthamoeba polyphaga (Amoeba)).